Consider the following 289-residue polypeptide: tRNA-cytidine(32) 2-sulfurtransferase (289 aa).

Positions S39–S44 match the PP-loop motif motif. [4Fe-4S] cluster contacts are provided by C114, C117, and C205.

This sequence belongs to the TtcA family. In terms of assembly, homodimer. Requires Mg(2+) as cofactor. The cofactor is [4Fe-4S] cluster.

Its subcellular location is the cytoplasm. The catalysed reaction is cytidine(32) in tRNA + S-sulfanyl-L-cysteinyl-[cysteine desulfurase] + AH2 + ATP = 2-thiocytidine(32) in tRNA + L-cysteinyl-[cysteine desulfurase] + A + AMP + diphosphate + H(+). It participates in tRNA modification. Its function is as follows. Catalyzes the ATP-dependent 2-thiolation of cytidine in position 32 of tRNA, to form 2-thiocytidine (s(2)C32). The sulfur atoms are provided by the cysteine/cysteine desulfurase (IscS) system. This Deinococcus geothermalis (strain DSM 11300 / CIP 105573 / AG-3a) protein is tRNA-cytidine(32) 2-sulfurtransferase.